We begin with the raw amino-acid sequence, 402 residues long: Envelope glycoprotein D (402 aa).

The signal sequence occupies residues 1 to 30; that stretch reads MSTFKLMMDGRLVFAMAIAILSVVLSCGTC. The Virion surface segment spans residues 31–355; sequence EKAKRAVRGR…NSTFVGISVG (325 aa). 2 N-linked (GlcNAc...) asparagine; by host glycosylation sites follow: asparagine 53 and asparagine 61. 3 cysteine pairs are disulfide-bonded: cysteine 88–cysteine 209, cysteine 126–cysteine 223, and cysteine 138–cysteine 147. Residues 281-315 form a disordered region; the sequence is PDNHPGFDSVESEITQNKTDPKPGQADPKPNQPFK. N-linked (GlcNAc...) asparagine; by host glycans are attached at residues asparagine 297 and asparagine 346. A helical transmembrane segment spans residues 356 to 372; it reads LGIAGLVLVGVILYVCL. Residues 373-402 lie on the Intravirion side of the membrane; sequence RRKKELKKSAQNGLTRLRSTFKDVKYTQLP.

This sequence belongs to the herpesviridae glycoprotein D family.

It localises to the virion membrane. Functionally, envelope glycoprotein that binds to host cell entry receptors, promoting the virus entry into host cells. May trigger fusion with host membrane, by recruiting the fusion machinery composed of gB and gH/gL. The chain is Envelope glycoprotein D (gD) from Equus caballus (Horse).